Here is a 164-residue protein sequence, read N- to C-terminus: Low molecular weight phosphotyrosine protein phosphatase 2 (164 aa).

The active-site Nucleophile is C14. R20 is a catalytic residue. Catalysis depends on D130, which acts as the Proton donor.

Belongs to the low molecular weight phosphotyrosine protein phosphatase family. In terms of tissue distribution, cone cells and primary pigment cells in developing pupal retina.

The protein resides in the cytoplasm. It catalyses the reaction O-phospho-L-tyrosyl-[protein] + H2O = L-tyrosyl-[protein] + phosphate. It carries out the reaction a phosphate monoester + H2O = an alcohol + phosphate. Functionally, catalyzes the dephosphorylation of tyrosine phosphorylated proteins and low-MW aryl phosphates. Can contribute to the regulation of a variety of developmental processes. This Drosophila melanogaster (Fruit fly) protein is Low molecular weight phosphotyrosine protein phosphatase 2 (primo-2).